A 130-amino-acid chain; its full sequence is MAKVQYFGTGRRKKSVARVILVPGDGKVTINKRDIEVYFGLETLRYIVNQPLVLTGTKDKFDVIVNVNGGGFTGQAGAIRHGITRALVKADETLKPELKKAGFLTRDPRMKERKKYGLKKARRAPQFSKR.

The disordered stretch occupies residues 102-130; the sequence is GFLTRDPRMKERKKYGLKKARRAPQFSKR. The segment covering 111–130 has biased composition (basic residues); it reads KERKKYGLKKARRAPQFSKR.

Belongs to the universal ribosomal protein uS9 family.

This chain is Small ribosomal subunit protein uS9, found in Clostridium novyi (strain NT).